A 482-amino-acid chain; its full sequence is Glutamate--tRNA ligase 2 (482 aa).

Positions 8-18 (PSPTGQLHIGG) match the 'HIGH' region motif. Residues 249-253 (KLSKR) carry the 'KMSKS' region motif. Lys-252 contributes to the ATP binding site.

This sequence belongs to the class-I aminoacyl-tRNA synthetase family. Glutamate--tRNA ligase type 1 subfamily. In terms of assembly, monomer.

The protein resides in the cytoplasm. It carries out the reaction tRNA(Glu) + L-glutamate + ATP = L-glutamyl-tRNA(Glu) + AMP + diphosphate. Its function is as follows. Catalyzes the attachment of glutamate to tRNA(Glu) in a two-step reaction: glutamate is first activated by ATP to form Glu-AMP and then transferred to the acceptor end of tRNA(Glu). This chain is Glutamate--tRNA ligase 2, found in Caldicellulosiruptor saccharolyticus (strain ATCC 43494 / DSM 8903 / Tp8T 6331).